A 126-amino-acid chain; its full sequence is Large ribosomal subunit protein uL22c (126 aa).

Belongs to the universal ribosomal protein uL22 family. In terms of assembly, part of the 50S ribosomal subunit.

Its subcellular location is the plastid. The protein localises to the chloroplast. Functionally, this protein binds specifically to 23S rRNA. Its function is as follows. The globular domain of the protein is located near the polypeptide exit tunnel on the outside of the subunit, while an extended beta-hairpin is found that lines the wall of the exit tunnel in the center of the 70S ribosome. The chain is Large ribosomal subunit protein uL22c (rpl22) from Cryptomeria japonica (Japanese cedar).